The primary structure comprises 294 residues: NAD kinase (294 aa).

Residue aspartate 74 is the Proton acceptor of the active site. NAD(+) is bound by residues 74-75, 148-149, arginine 159, arginine 176, aspartate 178, 189-194, and glutamine 247; these read DG, ND, and TAYALS.

This sequence belongs to the NAD kinase family. A divalent metal cation is required as a cofactor.

It is found in the cytoplasm. It carries out the reaction NAD(+) + ATP = ADP + NADP(+) + H(+). Involved in the regulation of the intracellular balance of NAD and NADP, and is a key enzyme in the biosynthesis of NADP. Catalyzes specifically the phosphorylation on 2'-hydroxyl of the adenosine moiety of NAD to yield NADP. In Azoarcus sp. (strain BH72), this protein is NAD kinase.